The sequence spans 3256 residues: MWPTRRLVTIKRSGVDGPHFPLSLSTCLFGRGIECDIRIQLPVVSKQHCKIEIHEQEAILHNFSSTNPTQVNGSVIDEPVRLKHGDVITIIDRSFRYENESLQNGRKSTEFPRKIREQEPARRVSRSSFSSDPDEKAQDSKAYSKITEGKVSGNPQVHIKNVKEDSTADDSKDSVAQGTTNVHSSEHAGRNGRNAADPISGDFKEISSVKLVSRYGELKSVPTTQCLDNSKKNESPFWKLYESVKKELDVKSQKENVLQYCRKSGLQTDYATEKESADGLQGETQLLVSRKSRPKSGGSGHAVAEPASPEQELDQNKGKGRDVESVQTPSKAVGASFPLYEPAKMKTPVQYSQQQNSPQKHKNKDLYTTGRRESVNLGKSEGFKAGDKTLTPRKLSTRNRTPAKVEDAADSATKPENLSSKTRGSIPTDVEVLPTETEIHNEPFLTLWLTQVERKIQKDSLSKPEKLGTTAGQMCSGLPGLSSVDINNFGDSINESEGIPLKRRRVSFGGHLRPELFDENLPPNTPLKRGEAPTKRKSLVMHTPPVLKKIIKEQPQPSGKQESGSEIHVEVKAQSLVISPPAPSPRKTPVASDQRRRSCKTAPASSSKSQTEVPKRGGRKSGNLPSKRVSISRSQHDILQMICSKRRSGASEANLIVAKSWADVVKLGAKQTQTKVIKHGPQRSMNKRQRRPATPKKPVGEVHSQFSTGHANSPCTIIIGKAHTEKVHVPARPYRVLNNFISNQKMDFKEDLSGIAEMFKTPVKEQPQLTSTCHIAISNSENLLGKQFQGTDSGEEPLLPTSESFGGNVFFSAQNAAKQPSDKCSASPPLRRQCIRENGNVAKTPRNTYKMTSLETKTSDTETEPSKTVSTANRSGRSTEFRNIQKLPVESKSEETNTEIVECILKRGQKATLLQQRREGEMKEIERPFETYKENIELKENDEKMKAMKRSRTWGQKCAPMSDLTDLKSLPDTELMKDTARGQNLLQTQDHAKAPKSEKGKITKMPCQSLQPEPINTPTHTKQQLKASLGKVGVKEELLAVGKFTRTSGETTHTHREPAGDGKSIRTFKESPKQILDPAARVTGMKKWPRTPKEEAQSLEDLAGFKELFQTPGPSEESMTDEKTTKIACKSPPPESVDTPTSTKQWPKRSLRKADVEEEFLALRKLTPSAGKAMLTPKPAGGDEKDIKAFMGTPVQKLDLAGTLPGSKRQLQTPKEKAQALEDLAGFKELFQTPGHTEELVAAGKTTKIPCDSPQSDPVDTPTSTKQRPKRSIRKADVEGELLACRNLMPSAGKAMHTPKPSVGEEKDIIIFVGTPVQKLDLTENLTGSKRRPQTPKEEAQALEDLTGFKELFQTPGHTEEAVAAGKTTKMPCESSPPESADTPTSTRRQPKTPLEKRDVQKELSALKKLTQTSGETTHTDKVPGGEDKSINAFRETAKQKLDPAASVTGSKRHPKTKEKAQPLEDLAGLKELFQTPVCTDKPTTHEKTTKIACRSQPDPVDTPTSSKPQSKRSLRKVDVEEEFFALRKRTPSAGKAMHTPKPAVSGEKNIYAFMGTPVQKLDLTENLTGSKRRLQTPKEKAQALEDLAGFKELFQTRGHTEESMTNDKTAKVACKSSQPDPDKNPASSKRRLKTSLGKVGVKEELLAVGKLTQTSGETTHTHTEPTGDGKSMKAFMESPKQILDSAASLTGSKRQLRTPKGKSEVPEDLAGFIELFQTPSHTKESMTNEKTTKVSYRASQPDLVDTPTSSKPQPKRSLRKADTEEEFLAFRKQTPSAGKAMHTPKPAVGEEKDINTFLGTPVQKLDQPGNLPGSNRRLQTRKEKAQALEELTGFRELFQTPCTDNPTTDEKTTKKILCKSPQSDPADTPTNTKQRPKRSLKKADVEEEFLAFRKLTPSAGKAMHTPKAAVGEEKDINTFVGTPVEKLDLLGNLPGSKRRPQTPKEKAKALEDLAGFKELFQTPGHTEESMTDDKITEVSCKSPQPDPVKTPTSSKQRLKISLGKVGVKEEVLPVGKLTQTSGKTTQTHRETAGDGKSIKAFKESAKQMLDPANYGTGMERWPRTPKEEAQSLEDLAGFKELFQTPDHTEESTTDDKTTKIACKSPPPESMDTPTSTRRRPKTPLGKRDIVEELSALKQLTQTTHTDKVPGDEDKGINVFRETAKQKLDPAASVTGSKRQPRTPKGKAQPLEDLAGLKELFQTPICTDKPTTHEKTTKIACRSPQPDPVGTPTIFKPQSKRSLRKADVEEESLALRKRTPSVGKAMDTPKPAGGDEKDMKAFMGTPVQKLDLPGNLPGSKRWPQTPKEKAQALEDLAGFKELFQTPGTDKPTTDEKTTKIACKSPQPDPVDTPASTKQRPKRNLRKADVEEEFLALRKRTPSAGKAMDTPKPAVSDEKNINTFVETPVQKLDLLGNLPGSKRQPQTPKEKAEALEDLVGFKELFQTPGHTEESMTDDKITEVSCKSPQPESFKTSRSSKQRLKIPLVKVDMKEEPLAVSKLTRTSGETTQTHTEPTGDSKSIKAFKESPKQILDPAASVTGSRRQLRTRKEKARALEDLVDFKELFSAPGHTEESMTIDKNTKIPCKSPPPELTDTATSTKRCPKTRPRKEVKEELSAVERLTQTSGQSTHTHKEPASGDEGIKVLKQRAKKKPNPVEEEPSRRRPRAPKEKAQPLEDLAGFTELSETSGHTQESLTAGKATKIPCESPPLEVVDTTASTKRHLRTRVQKVQVKEEPSAVKFTQTSGETTDADKEPAGEDKGIKALKESAKQTPAPAASVTGSRRRPRAPRESAQAIEDLAGFKDPAAGHTEESMTDDKTTKIPCKSSPELEDTATSSKRRPRTRAQKVEVKEELLAVGKLTQTSGETTHTDKEPVGEGKGTKAFKQPAKRKLDAEDVIGSRRQPRAPKEKAQPLEDLASFQELSQTPGHTEELANGAADSFTSAPKQTPDSGKPLKISRRVLRAPKVEPVGDVVSTRDPVKSQSKSNTSLPPLPFKRGGGKDGSVTGTKRLRCMPAPEEIVEELPASKKQRVAPRARGKSSEPVVIMKRSLRTSAKRIEPAEELNSNDMKTNKEEHKLQDSVPENKGISLRSRRQNKTEAEQQITEVFVLAERIEINRNEKKPMKTSPEMDIQNPDDGARKPIPRDKVTENKRCLRSARQNESSQPKVAEESGGQKSAKVLMQNQKGKGEAGNSDSMCLRSRKTKSQPAASTLESKSVQRVTRSVKRCAENPKKAEDNVCVKKIRTRSHRDSEDI.

An FHA domain is found at 27 to 76 (CLFGRGIECDIRIQLPVVSKQHCKIEIHEQEAILHNFSSTNPTQVNGSVI). The disordered stretch occupies residues 101 to 199 (SLQNGRKSTE…RNGRNAADPI (99 aa)). Residues 107-122 (KSTEFPRKIREQEPAR) show a composition bias toward basic and acidic residues. A phosphoserine mark is found at serine 125, serine 128, and serine 166. Over residues 161 to 173 (NVKEDSTADDSKD) the composition is skewed to basic and acidic residues. Residues 174 to 183 (SVAQGTTNVH) are compositionally biased toward polar residues. Lysine 245 is covalently cross-linked (Glycyl lysine isopeptide (Lys-Gly) (interchain with G-Cter in SUMO2)). Residues serine 264, serine 296, and serine 308 each carry the phosphoserine modification. Disordered stretches follow at residues 271–426 (ATEK…RGSI) and 513–542 (RPEL…LVMH). Basic and acidic residues predominate over residues 314–324 (DQNKGKGRDVE). Residues threonine 328 and threonine 347 each carry the phosphothreonine modification. The segment covering 349–358 (VQYSQQQNSP) has biased composition (polar residues). Serine 352, serine 357, and serine 374 each carry phosphoserine. Threonine 401 is modified (phosphothreonine). The residue at position 411 (serine 411) is a Phosphoserine. Polar residues predominate over residues 414 to 425 (KPENLSSKTRGS). A positively charged patch (CP) region spans residues 495 to 678 (ESEGIPLKRR…AKQTQTKVIK (184 aa)). Residues 502-549 (KRRRVSFGGHLRPELFDENLPPNTPLKRGEAPTKRKSLVMHTPPVLKK) enclose the PP1-binding domain. A Phosphoserine modification is found at serine 538. Position 543 is a phosphothreonine (threonine 543). The interval 575–632 (SLVISPPAPSPRKTPVASDQRRRSCKTAPASSSKSQTEVPKRGGRKSGNLPSKRVSIS) is disordered. A phosphoserine mark is found at serine 579 and serine 584. Residues 603 to 612 (PASSSKSQTE) show a composition bias toward polar residues. Position 648 is a phosphoserine (serine 648). Residues 674 to 707 (TKVIKHGPQRSMNKRQRRPATPKKPVGEVHSQFS) form a disordered region. Positions 676 to 694 (VIKHGPQRSMNKRQRRPAT) are enriched in basic residues. Threonine 761 is subject to Phosphothreonine. A disordered region spans residues 853-886 (SLETKTSDTETEPSKTVSTANRSGRSTEFRNIQK). Serine 859 carries the phosphoserine modification. The segment covering 866–882 (SKTVSTANRSGRSTEFR) has biased composition (polar residues). Residues 1000 to 2928 (GKITKMPCQS…ASFQELSQTP (1929 aa)) are 16 X 122 AA approximate repeats. K167R repeat units follow at residues 1001–1112 (KITK…FQTP), 1123–1234 (KTTK…FQTP), 1245–1356 (KTTK…FQTP), 1367–1477 (KTTK…FQTP), 1488–1597 (KTTK…LFQT), and 1609–1720 (KTAK…FQTP). The residue at position 1017 (threonine 1017) is a Phosphothreonine. Residues lysine 1022 and lysine 1035 each participate in a glycyl lysine isopeptide (Lys-Gly) (interchain with G-Cter in SUMO2) cross-link. Residues 1045–1073 (TRTSGETTHTHREPAGDGKSIRTFKESPK) are disordered. Residues 1052 to 1072 (THTHREPAGDGKSIRTFKESP) show a composition bias toward basic and acidic residues. Position 1071 is a phosphoserine (serine 1071). Threonine 1091 carries the phosphothreonine modification. Residue lysine 1093 forms a Glycyl lysine isopeptide (Lys-Gly) (interchain with G-Cter in SUMO1); alternate linkage. A Glycyl lysine isopeptide (Lys-Gly) (interchain with G-Cter in SUMO2); alternate cross-link involves residue lysine 1093. Position 1098 is a phosphoserine (serine 1098). Positions 1109-1151 (FQTPGPSEESMTDEKTTKIACKSPPPESVDTPTSTKQWPKRSL) are disordered. A Phosphothreonine modification is found at threonine 1111. At serine 1131 the chain carries Phosphoserine. Position 1139 is a phosphothreonine (threonine 1139). Serine 1142 carries the post-translational modification Phosphoserine. Threonine 1167 is modified (phosphothreonine). Serine 1169 is modified (phosphoserine). Threonine 1176 is subject to Phosphothreonine. Residues lysine 1185 and lysine 1188 each participate in a glycyl lysine isopeptide (Lys-Gly) (interchain with G-Cter in SUMO2) cross-link. Threonine 1193 carries the phosphothreonine modification. Position 1207 is a phosphoserine (serine 1207). At threonine 1233 the chain carries Phosphothreonine. The interval 1246–1276 (TTKIPCDSPQSDPVDTPTSTKQRPKRSIRKA) is disordered. Residues serine 1253 and serine 1256 each carry the phosphoserine modification. The segment covering 1253 to 1266 (SPQSDPVDTPTSTK) has biased composition (polar residues). 4 positions are modified to phosphothreonine: threonine 1261, threonine 1298, threonine 1315, and threonine 1327. The disordered stretch occupies residues 1323–1518 (TENLTGSKRR…PQSKRSLRKV (196 aa)). The residue at position 1329 (serine 1329) is a Phosphoserine. Threonine 1335 carries the phosphothreonine modification. Lysine 1337 is covalently cross-linked (Glycyl lysine isopeptide (Lys-Gly) (interchain with G-Cter in SUMO2)). Threonine 1355 is subject to Phosphothreonine. A Phosphoserine modification is found at serine 1376. At threonine 1383 the chain carries Phosphothreonine. Serine 1386 is subject to Phosphoserine. Composition is skewed to basic and acidic residues over residues 1394–1406 (PLEK…ELSA) and 1418–1442 (THTD…KQKL). 2 positions are modified to phosphothreonine: threonine 1420 and threonine 1437. Serine 1496 carries the phosphoserine modification. Phosphothreonine is present on threonine 1503. Serine 1506 carries the post-translational modification Phosphoserine. Position 1540 is a phosphothreonine (threonine 1540). Tyrosine 1552 is subject to Phosphotyrosine. Phosphothreonine occurs at positions 1557 and 1569. Phosphoserine occurs at positions 1571 and 1617. Residues 1597–1675 (TRGHTEESMT…PTGDGKSMKA (79 aa)) are disordered. Lysine 1639 is modified (N6-acetyllysine). Lysine 1643 is covalently cross-linked (Glycyl lysine isopeptide (Lys-Gly) (interchain with G-Cter in SUMO2)). Residues 1660–1672 (THTHTEPTGDGKS) are compositionally biased toward basic and acidic residues. A phosphoserine mark is found at serine 1679 and serine 1689. Disordered stretches follow at residues 1689–1708 (SLTG…EVPE), 1717–1765 (FQTP…ADTE), 1771–1790 (FRKQ…PAVG), 1801–1824 (TPVQ…TRKE), and 1839–1886 (FQTP…KADV). Lysine 1703 is covalently cross-linked (Glycyl lysine isopeptide (Lys-Gly) (interchain with G-Cter in SUMO2)). Position 1719 is a phosphothreonine (threonine 1719). Phosphoserine is present on serine 1721. Residues 1722-1733 (HTKESMTNEKTT) are compositionally biased toward basic and acidic residues. K167R repeat units follow at residues 1731–1842 (KTTK…FQTP), 1854–1964 (TKKI…FQTP), 1975–2086 (KITE…FQTP), 2097–2204 (KTTK…FQTP), and 2215–2326 (KTTK…FQTP). At serine 1740 the chain carries Phosphoserine. A phosphothreonine mark is found at threonine 1747, threonine 1764, threonine 1784, and threonine 1801. The residue at position 1815 (serine 1815) is a Phosphoserine. Threonine 1841 is subject to Phosphothreonine. Residues serine 1861 and serine 1864 each carry the phosphoserine modification. Residues 1861-1874 (SPQSDPADTPTNTK) are compositionally biased toward polar residues. Phosphothreonine occurs at positions 1869, 1897, 1906, and 1923. Phosphoserine is present on serine 1937. Residues 1961 to 2002 (FQTPGHTEESMTDDKITEVSCKSPQPDPVKTPTSSKQRLKIS) are disordered. Phosphothreonine is present on threonine 1963. Over residues 1966-1977 (HTEESMTDDKIT) the composition is skewed to basic and acidic residues. Phosphoserine is present on serine 1983. The residue at position 2005 (lysine 2005) is an N6-acetyllysine. Lysine 2009 participates in a covalent cross-link: Glycyl lysine isopeptide (Lys-Gly) (interchain with G-Cter in SUMO1); alternate. Lysine 2009 is covalently cross-linked (Glycyl lysine isopeptide (Lys-Gly) (interchain with G-Cter in SUMO2); alternate). The tract at residues 2017–2192 (KLTQTSGKTT…TPKGKAQPLE (176 aa)) is disordered. Residues threonine 2028 and threonine 2065 each carry the phosphothreonine modification. 2 stretches are compositionally biased toward basic and acidic residues: residues 2028–2046 (THRE…KESA) and 2061–2070 (RWPRTPKEEA). Residue lysine 2067 forms a Glycyl lysine isopeptide (Lys-Gly) (interchain with G-Cter in SUMO1); alternate linkage. A Glycyl lysine isopeptide (Lys-Gly) (interchain with G-Cter in SUMO2); alternate cross-link involves residue lysine 2067. Serine 2072 carries the post-translational modification Phosphoserine. Residue threonine 2085 is modified to Phosphothreonine. Positions 2087–2099 (DHTEESTTDDKTT) are enriched in basic and acidic residues. The residue at position 2105 (serine 2105) is a Phosphoserine. Phosphothreonine is present on threonine 2113. Serine 2116 and serine 2135 each carry phosphoserine. The segment covering 2145 to 2168 (HTDKVPGDEDKGINVFRETAKQKL) has biased composition (basic and acidic residues). A phosphothreonine mark is found at threonine 2146, threonine 2163, and threonine 2203. A disordered region spans residues 2205–2400 (ICTDKPTTHE…KPAVSDEKNI (196 aa)). The residue at position 2223 (serine 2223) is a Phosphoserine. Phosphothreonine occurs at positions 2231 and 2233. Phosphoserine is present on serine 2239. Threonine 2259 bears the Phosphothreonine mark. Residue serine 2261 is modified to Phosphoserine. Threonine 2268, threonine 2285, threonine 2325, threonine 2328, and threonine 2333 each carry phosphothreonine. K167R repeat units follow at residues 2336-2447 (KTTK…FQTP), 2458-2569 (KITE…FSAP), 2580-2688 (KNTK…LSET), 2700-2805 (KATK…GFKD), and 2819-2928 (KTTK…SQTP). The residue at position 2344 (serine 2344) is a Phosphoserine. Threonine 2352 and threonine 2389 each carry phosphothreonine. Serine 2395 bears the Phosphoserine mark. The residue at position 2406 (threonine 2406) is a Phosphothreonine. Serine 2420 carries the post-translational modification Phosphoserine. Phosphothreonine occurs at positions 2426 and 2446. The tract at residues 2445-2480 (QTPGHTEESMTDDKITEVSCKSPQPESFKTSRSSKQ) is disordered. The segment covering 2449-2460 (HTEESMTDDKIT) has biased composition (basic and acidic residues). The segment covering 2463–2475 (SCKSPQPESFKTS) has biased composition (polar residues). Serine 2466 carries the post-translational modification Phosphoserine. Residue lysine 2492 forms a Glycyl lysine isopeptide (Lys-Gly) (interchain with G-Cter in SUMO1) linkage. A disordered region spans residues 2497–2521 (AVSKLTRTSGETTQTHTEPTGDSKS). The segment covering 2501 to 2514 (LTRTSGETTQTHTE) has biased composition (polar residues). Residues serine 2505, serine 2528, and serine 2588 each carry the phosphoserine modification. The segment at 2570-3256 (GHTEESMTID…TRSHRDSEDI (687 aa)) is disordered. 3 stretches are compositionally biased toward basic and acidic residues: residues 2609 to 2618 (RKEVKEELSA), 2632 to 2644 (THKE…EGIK), and 2660 to 2675 (EPSR…KAQP). Residue lysine 2613 forms a Glycyl lysine isopeptide (Lys-Gly) (interchain with G-Cter in SUMO1); alternate linkage. A Glycyl lysine isopeptide (Lys-Gly) (interchain with G-Cter in SUMO2); alternate cross-link involves residue lysine 2613. A Phosphoserine modification is found at serine 2638. A compositionally biased stretch (polar residues) spans 2685–2696 (LSETSGHTQESL). Serine 2708 bears the Phosphoserine mark. A Glycyl lysine isopeptide (Lys-Gly) (interchain with G-Cter in SUMO1); alternate cross-link involves residue lysine 2734. A Glycyl lysine isopeptide (Lys-Gly) (interchain with G-Cter in SUMO2); alternate cross-link involves residue lysine 2734. Composition is skewed to basic and acidic residues over residues 2751–2770 (DADK…KESA) and 2810–2821 (HTEESMTDDKTT). 3 positions are modified to phosphoserine: serine 2827, serine 2828, and serine 2838. Residue lysine 2852 forms a Glycyl lysine isopeptide (Lys-Gly) (interchain with G-Cter in SUMO1); alternate linkage. Lysine 2852 is covalently cross-linked (Glycyl lysine isopeptide (Lys-Gly) (interchain with G-Cter in SUMO2); alternate). Basic and acidic residues predominate over residues 2869 to 2881 (THTDKEPVGEGKG). Positions 2941–2951 (SFTSAPKQTPD) are enriched in polar residues. Lysine 2967 participates in a covalent cross-link: Glycyl lysine isopeptide (Lys-Gly) (interchain with G-Cter in SUMO2). Positions 2982–2991 (KSQSKSNTSL) are enriched in polar residues. Position 2986 is an N6-acetyllysine (lysine 2986). Residues 3029 to 3039 (KKQRVAPRARG) are compositionally biased toward basic residues. An ATP-binding site is contributed by 3034–3041 (APRARGKS). Serine 3041 bears the Phosphoserine mark. Composition is skewed to basic and acidic residues over residues 3071 to 3080 (KTNKEEHKLQ) and 3113 to 3124 (ERIEINRNEKKP). A Phosphoserine modification is found at serine 3128. The segment covering 3138–3154 (DGARKPIPRDKVTENKR) has biased composition (basic and acidic residues). Polar residues predominate over residues 3207–3223 (SQPAASTLESKSVQRVT). The span at 3228 to 3241 (RCAENPKKAEDNVC) shows a compositional bias: basic and acidic residues.

Interacts with KIF15. Interacts (via the FHA domain) with NIFK. Interacts with PPP1CC. Component of a complex at least composed of ZNF335, HCFC1, CCAR2, EMSY, MKI67, RBBP5, ASH2L and WDR5; the complex is formed as a result of interactions between components of a nuclear receptor-mediated transcription complex and a histone methylation complex. Interacts with ZNF335. Hyperphosphorylated by CDK1 in mitosis; hyperphosphorylatiom prevents undergoing liquid-liquid phase separation. Dephosphorylated by PPP1CC at the onset of anaphase. Dephosphorylated by protein phosphatase 2A (PP2A) at the onset of anaphase. Dephosphorylation by protein phosphatase 2A (PP2A) and simultaneous exposure of the positively charged patch (CP) during mitotic exit induce the RNA-dependent formation of a liquid-like condensed phase on the chromosome surface. Post-translationally, ubiquitinated by the APC/C complex after neuronal progenitors exit mitosis during brain development, leading to clearance from constitutive heterochromatin.

It localises to the chromosome. Its subcellular location is the nucleus. It is found in the nucleolus. In terms of biological role, protein that associates with the surface of mitotic chromosomes and acts both as a chromosome repellent during early mitosis and chromosome attractant during late mitosis. Required to maintain individual mitotic chromosomes dispersed in the cytoplasm following nuclear envelope disassembly. During early mitosis, relocalizes from nucleoli to the chromosome surface where it forms extended brush structures that cover a substantial fraction of the chromosome surface. The MKI67 brush structure prevents chromosomes from collapsing into a single chromatin mass by forming a steric and electrostatic charge barrier: the protein has a high net electrical charge and acts as a surfactant, dispersing chromosomes and enabling independent chromosome motility. During mitotic anaphase, the MKI67 brush structure collapses and MKI67 switches from a chromosome repellent to a chromosome attractant to promote chromosome clustering and facilitate the exclusion of large cytoplasmic particles from the future nuclear space. Mechanistically, dephosphorylation during mitotic exit and simultaneous exposure of a conserved basic patch induce the RNA-dependent formation of a liquid-like condensed phase on the chromosome surface, promoting coalescence of neighboring chromosome surfaces and clustering of chromosomes. Binds premature ribosomal RNAs during anaphase; promoting liquid-liquid phase separation. Binds DNA, with a preference for supercoiled DNA and AT-rich DNA. Does not contribute to the internal structure of mitotic chromosomes. May play a role in chromatin organization; it is however unclear whether it plays a direct role in chromatin organization or whether it is an indirect consequence of its function in mitotic chromosome. The protein is Proliferation marker protein Ki-67 of Homo sapiens (Human).